A 413-amino-acid polypeptide reads, in one-letter code: S-adenosylmethionine synthase (413 aa).

Histidine 15 is an ATP binding site. Aspartate 17 is a binding site for Mg(2+). Glutamate 43 lines the K(+) pocket. Positions 56 and 100 each coordinate L-methionine. Positions 100–110 are flexible loop; that stretch reads QSPDISQGVNE. ATP is bound by residues 171-173, 248-249, aspartate 257, 263-264, alanine 280, and lysine 284; these read DGK, KF, and RK. Aspartate 257 is an L-methionine binding site. Lysine 288 provides a ligand contact to L-methionine.

This sequence belongs to the AdoMet synthase family. Homotetramer; dimer of dimers. Mg(2+) serves as cofactor. The cofactor is K(+).

It is found in the cytoplasm. The enzyme catalyses L-methionine + ATP + H2O = S-adenosyl-L-methionine + phosphate + diphosphate. Its pathway is amino-acid biosynthesis; S-adenosyl-L-methionine biosynthesis; S-adenosyl-L-methionine from L-methionine: step 1/1. In terms of biological role, catalyzes the formation of S-adenosylmethionine (AdoMet) from methionine and ATP. The overall synthetic reaction is composed of two sequential steps, AdoMet formation and the subsequent tripolyphosphate hydrolysis which occurs prior to release of AdoMet from the enzyme. The polypeptide is S-adenosylmethionine synthase (Prochlorococcus marinus (strain MIT 9515)).